A 221-amino-acid polypeptide reads, in one-letter code: Urease accessory protein UreG (221 aa).

19–26 (GPVGSGKT) provides a ligand contact to GTP.

It belongs to the SIMIBI class G3E GTPase family. UreG subfamily. As to quaternary structure, homodimer. UreD, UreF and UreG form a complex that acts as a GTP-hydrolysis-dependent molecular chaperone, activating the urease apoprotein by helping to assemble the nickel containing metallocenter of UreC. The UreE protein probably delivers the nickel.

The protein localises to the cytoplasm. In terms of biological role, facilitates the functional incorporation of the urease nickel metallocenter. This process requires GTP hydrolysis, probably effectuated by UreG. Functionally, expression of the urease operon increases the likelihood of bacterial survival by contributing to acid resistance in vitro and in vivo in BALB/c mice. Y.enterocolitica enters the body via an oral path and must survive the acidic stomach before being able to colonize the intestinal mucosa. This is Urease accessory protein UreG from Yersinia enterocolitica.